A 430-amino-acid chain; its full sequence is UPF0597 protein BDI_1130 (430 aa).

It belongs to the UPF0597 family.

This is UPF0597 protein BDI_1130 from Parabacteroides distasonis (strain ATCC 8503 / DSM 20701 / CIP 104284 / JCM 5825 / NCTC 11152).